The sequence spans 430 residues: Type II methyltransferase M.Sau96I (430 aa).

Residues Ile-9 to Ile-63 enclose the HTH cro/C1-type domain. Residues Tyr-99–Phe-429 enclose the SAM-dependent MTase C5-type domain. The active site involves Cys-174.

This sequence belongs to the class I-like SAM-binding methyltransferase superfamily. C5-methyltransferase family.

It catalyses the reaction a 2'-deoxycytidine in DNA + S-adenosyl-L-methionine = a 5-methyl-2'-deoxycytidine in DNA + S-adenosyl-L-homocysteine + H(+). Its function is as follows. A methylase that recognizes the double-stranded sequence 5'-GGNCC-3', methylates C-4 on both strands, and protects the DNA from cleavage by the Sau96I endonuclease. This is Type II methyltransferase M.Sau96I from Staphylococcus aureus.